The chain runs to 168 residues: Thiol peroxidase (168 aa).

The Thioredoxin domain occupies 19–168 (PQAGSKAQAF…YDAALNVLKA (150 aa)). Cys61 functions as the Cysteine sulfenic acid (-SOH) intermediate in the catalytic mechanism. A disulfide bridge links Cys61 with Cys95.

It belongs to the peroxiredoxin family. Tpx subfamily. Homodimer.

The catalysed reaction is a hydroperoxide + [thioredoxin]-dithiol = an alcohol + [thioredoxin]-disulfide + H2O. Its function is as follows. Thiol-specific peroxidase that catalyzes the reduction of hydrogen peroxide and organic hydroperoxides to water and alcohols, respectively. Plays a role in cell protection against oxidative stress by detoxifying peroxides. This chain is Thiol peroxidase, found in Salmonella typhimurium (strain LT2 / SGSC1412 / ATCC 700720).